We begin with the raw amino-acid sequence, 435 residues long: Transcription factor gkaF (435 aa).

Residues 1–19 (MGRPQRGDTAKERRERQDK) are compositionally biased toward basic and acidic residues. Disordered regions lie at residues 1–40 (MGRPQRGDTAKERRERQDKVTSPPESGPISQSGLSDTVDW), 115–158 (STTA…SSQS), and 231–257 (FSSESASPHVNRPPIQQQQSPSRFLAP). A compositionally biased stretch (polar residues) spans 28–40 (PISQSGLSDTVDW). Over residues 143 to 158 (SQSSDSSKPSSTSSQS) the composition is skewed to low complexity.

Its subcellular location is the nucleus. Its function is as follows. Transcription factor; part of the gene cluster that mediates the biosynthesis of GKK1032, fungal natural products containing a macrocyclic para-cyclophane connected to a decahydrofluorene ring system that show potent antitumor activities. The chain is Transcription factor gkaF from Penicillium citrinum.